The primary structure comprises 426 residues: Adenylosuccinate synthetase (426 aa).

Residues 12-18 (GDEGKGK) and 40-42 (GHT) each bind GTP. Catalysis depends on D13, which acts as the Proton acceptor. Mg(2+) is bound by residues D13 and G40. IMP is bound by residues 13-16 (DEGK), 38-41 (NAGH), T131, R145, Q226, T241, and R305. H41 acts as the Proton donor in catalysis. 301 to 307 (ATTGRKR) provides a ligand contact to substrate. GTP contacts are provided by residues R307, 333–335 (KLD), and 415–417 (SVG).

The protein belongs to the adenylosuccinate synthetase family. As to quaternary structure, homodimer. The cofactor is Mg(2+).

Its subcellular location is the cytoplasm. The enzyme catalyses IMP + L-aspartate + GTP = N(6)-(1,2-dicarboxyethyl)-AMP + GDP + phosphate + 2 H(+). The protein operates within purine metabolism; AMP biosynthesis via de novo pathway; AMP from IMP: step 1/2. Functionally, plays an important role in the de novo pathway of purine nucleotide biosynthesis. Catalyzes the first committed step in the biosynthesis of AMP from IMP. The sequence is that of Adenylosuccinate synthetase from Nitratidesulfovibrio vulgaris (strain ATCC 29579 / DSM 644 / CCUG 34227 / NCIMB 8303 / VKM B-1760 / Hildenborough) (Desulfovibrio vulgaris).